A 713-amino-acid polypeptide reads, in one-letter code: Polyribonucleotide nucleotidyltransferase (713 aa).

Mg(2+) is bound by residues Asp-498 and Asp-504. Positions 565 to 631 (PRILSLKVPV…RIEDLTREAK (67 aa)) constitute a KH domain. The S1 motif domain maps to 633–701 (GEIYEGTVTR…ERGKIDLIRP (69 aa)).

This sequence belongs to the polyribonucleotide nucleotidyltransferase family. Mg(2+) serves as cofactor.

The protein resides in the cytoplasm. It catalyses the reaction RNA(n+1) + phosphate = RNA(n) + a ribonucleoside 5'-diphosphate. Involved in mRNA degradation. Catalyzes the phosphorolysis of single-stranded polyribonucleotides processively in the 3'- to 5'-direction. This is Polyribonucleotide nucleotidyltransferase from Thermus thermophilus.